The primary structure comprises 421 residues: UDP-N-acetylglucosamine 1-carboxyvinyltransferase (421 aa).

A phosphoenolpyruvate-binding site is contributed by 22-23; sequence KN. Arg93 contacts UDP-N-acetyl-alpha-D-glucosamine. Catalysis depends on Cys117, which acts as the Proton donor. Residue Cys117 is modified to 2-(S-cysteinyl)pyruvic acid O-phosphothioketal. Residues 122 to 126, Asp308, and Ile330 contribute to the UDP-N-acetyl-alpha-D-glucosamine site; that span reads RPVDL.

This sequence belongs to the EPSP synthase family. MurA subfamily.

The protein resides in the cytoplasm. It catalyses the reaction phosphoenolpyruvate + UDP-N-acetyl-alpha-D-glucosamine = UDP-N-acetyl-3-O-(1-carboxyvinyl)-alpha-D-glucosamine + phosphate. It participates in cell wall biogenesis; peptidoglycan biosynthesis. In terms of biological role, cell wall formation. Adds enolpyruvyl to UDP-N-acetylglucosamine. The protein is UDP-N-acetylglucosamine 1-carboxyvinyltransferase of Pseudomonas savastanoi pv. phaseolicola (strain 1448A / Race 6) (Pseudomonas syringae pv. phaseolicola (strain 1448A / Race 6)).